The sequence spans 477 residues: ATP synthase subunit beta (477 aa).

148 to 155 lines the ATP pocket; the sequence is GGAGVGKT.

Belongs to the ATPase alpha/beta chains family. In terms of assembly, F-type ATPases have 2 components, CF(1) - the catalytic core - and CF(0) - the membrane proton channel. CF(1) has five subunits: alpha(3), beta(3), gamma(1), delta(1), epsilon(1). CF(0) has three main subunits: a(1), b(2) and c(9-12). The alpha and beta chains form an alternating ring which encloses part of the gamma chain. CF(1) is attached to CF(0) by a central stalk formed by the gamma and epsilon chains, while a peripheral stalk is formed by the delta and b chains.

The protein localises to the cell inner membrane. The enzyme catalyses ATP + H2O + 4 H(+)(in) = ADP + phosphate + 5 H(+)(out). In terms of biological role, produces ATP from ADP in the presence of a proton gradient across the membrane. The catalytic sites are hosted primarily by the beta subunits. The chain is ATP synthase subunit beta from Psychrobacter cryohalolentis (strain ATCC BAA-1226 / DSM 17306 / VKM B-2378 / K5).